A 685-amino-acid chain; its full sequence is MRLLIFLGLLWSLVATLLGSKWPEPVFGRLVSPGFPEKYADHQDRSWTLTAPPGYRLRLYFTHFDLELSYRCEYDFVKLSSGTKVLATLCGQESTDTEQAPGNDTFYSLGPSLKVTFHSDYSNEKPFTGFEAFYAAEDVDECRVSLGDSVPCDHYCHNYLGGYYCSCRAGYVLHQNKHTCSALCSGQVFTGRSGYLSSPEYPQPYPKLSSCTYSIRLEDGFSVILDFVESFDVETHPEAQCPYDSLKIQTDKGEHGPFCGKTLPPRIETDSHKVTITFATDESGNHTGWKIHYTSTARPCPDPTAPPNGSISPVQAIYVLKDRFSVFCKTGFELLQGSVPLKSFTAVCQKDGSWDRPMPECSIIDCGPPDDLPNGHVDYITGPEVTTYKAVIQYSCEETFYTMSSNGKYVCEADGFWTSSKGEKLPPVCEPVCGLSTHTIGGRIVGGQPAKPGDFPWQVLLLGQTTAAAGALIHDNWVLTAAHAVYEKRMAASSLNIRMGILKRLSPHYTQAWPEEIFIHEGYTHGAGFDNDIALIKLKNKVTINGSIMPVCLPRKEAASLMRTDFTGTVAGWGLTQKGLLARNLMFVDIPIADHQKCTAVYEKLYPGVRVSANMLCAGLETGGKDSCRGDSGGALVFLDNETQRWFVGGIVSWGSINCGAADQYGVYTKVINYIPWIENIISNF.

Positions 1–19 (MRLLIFLGLLWSLVATLLG) are cleaved as a signal peptide. The CUB 1 domain maps to 20 to 137 (SKWPEPVFGR…TGFEAFYAAE (118 aa)). Ca(2+) is bound by residues E67 and D75. A disulfide bridge links C72 with C90. N103 carries N-linked (GlcNAc...) asparagine glycosylation. Residues D120, S122, N123, D138, and E141 each coordinate Ca(2+). One can recognise an EGF-like; calcium-binding domain in the interval 138–181 (DVDECRVSLGDSVPCDHYCHNYLGGYYCSCRAGYVLHQNKHTCS). Intrachain disulfides connect C142/C156, C152/C165, C167/C180, C184/C211, and C241/C259. Positions 158 and 162 each coordinate Ca(2+). A (3R)-3-hydroxyasparagine modification is found at N158. The CUB 2 domain occupies 184 to 296 (CSGQVFTGRS…TGWKIHYTST (113 aa)). N-linked (GlcNAc...) asparagine glycosylation is found at N285 and N308. 2 Sushi domains span residues 298–363 (RPCP…ECSI) and 364–431 (IDCG…VCEP). 7 disulfides stabilise this stretch: C300/C348, C328/C361, C366/C411, C396/C429, C433/C552, C598/C617, and C628/C659. One can recognise a Peptidase S1 domain in the interval 444–683 (IVGGQPAKPG…YIPWIENIIS (240 aa)). Residues H483 and D532 each act as charge relay system in the active site. N545 carries N-linked (GlcNAc...) asparagine glycosylation. The active-site Charge relay system is the S632. The N-linked (GlcNAc...) asparagine glycan is linked to N641.

It belongs to the peptidase S1 family. As to quaternary structure, homodimer; disulfide-linked. Binds MBL2. Isoform 2 binds to MASP1. Binds SERPING1. The iron and 2-oxoglutarate dependent 3-hydroxylation of aspartate and asparagine is (R) stereospecific within EGF domains. As to expression, plasma.

It localises to the secreted. It carries out the reaction Selective cleavage after Arg-223 in complement component C2 (-Ser-Leu-Gly-Arg-|-Lys-Ile-Gln-Ile) and after Arg-76 in complement component C4 (-Gly-Leu-Gln-Arg-|-Ala-Leu-Glu-Ile).. In terms of biological role, serum protease that plays an important role in the activation of the complement system via mannose-binding lectin. After activation by auto-catalytic cleavage it cleaves C2 and C4, leading to their activation and to the formation of C3 convertase. This Mus musculus (Mouse) protein is Mannan-binding lectin serine protease 2 (Masp2).